Reading from the N-terminus, the 309-residue chain is HPr kinase/phosphorylase (309 aa).

Catalysis depends on residues histidine 138 and lysine 159. 153 to 160 (GQSGVGKS) contacts ATP. Position 160 (serine 160) interacts with Mg(2+). Aspartate 177 serves as the catalytic Proton acceptor; for phosphorylation activity. Proton donor; for dephosphorylation activity. The segment at 201–210 (LEIRGLGIIN) is important for the catalytic mechanism of both phosphorylation and dephosphorylation. Glutamate 202 contacts Mg(2+). Arginine 243 is an active-site residue. The tract at residues 264 to 269 (PVRPGR) is important for the catalytic mechanism of dephosphorylation.

It belongs to the HPrK/P family. As to quaternary structure, homohexamer. Mg(2+) is required as a cofactor.

It catalyses the reaction [HPr protein]-L-serine + ATP = [HPr protein]-O-phospho-L-serine + ADP + H(+). The enzyme catalyses [HPr protein]-O-phospho-L-serine + phosphate + H(+) = [HPr protein]-L-serine + diphosphate. In terms of biological role, catalyzes the ATP- as well as the pyrophosphate-dependent phosphorylation of a specific serine residue in HPr, a phosphocarrier protein of the phosphoenolpyruvate-dependent sugar phosphotransferase system (PTS). HprK/P also catalyzes the pyrophosphate-producing, inorganic phosphate-dependent dephosphorylation (phosphorolysis) of seryl-phosphorylated HPr (P-Ser-HPr). The two antagonistic activities of HprK/P are regulated by several intracellular metabolites, which change their concentration in response to the absence or presence of rapidly metabolisable carbon sources (glucose, fructose, etc.) in the growth medium. Also phosphorylates/dephosphorylates the HPr-like catabolite repression protein crh on a specific serine residue. Therefore, by controlling the phosphorylation state of HPr and crh, HPrK/P is a sensor enzyme that plays a major role in the regulation of carbon metabolism and sugar transport: it mediates carbon catabolite repression (CCR), and regulates PTS-catalyzed carbohydrate uptake and inducer exclusion. The polypeptide is HPr kinase/phosphorylase (Bacillus cereus (strain G9842)).